We begin with the raw amino-acid sequence, 156 residues long: MVHAQFDPTSREELAIAAVEAKIAKDLSWQQIADAAGYSPAFVTAAVLGQHPLPPRAADTVAGLLGLGDDAALLLQTIPTRGSIPAGVPTDPTIYRFYEMLQVYGTTLKALIHEQFGDGIISAINFKLDVRKVPDPDGGYRAVVTLDGKYLPTVPF.

Catalysis depends on residues R96, E99, and S122.

The protein belongs to the cyanase family.

The catalysed reaction is cyanate + hydrogencarbonate + 3 H(+) = NH4(+) + 2 CO2. Functionally, catalyzes the reaction of cyanate with bicarbonate to produce ammonia and carbon dioxide. This Mycobacteroides abscessus (strain ATCC 19977 / DSM 44196 / CCUG 20993 / CIP 104536 / JCM 13569 / NCTC 13031 / TMC 1543 / L948) (Mycobacterium abscessus) protein is Cyanate hydratase.